Reading from the N-terminus, the 196-residue chain is Imidazoleglycerol-phosphate dehydratase (196 aa).

It belongs to the imidazoleglycerol-phosphate dehydratase family.

It is found in the cytoplasm. It catalyses the reaction D-erythro-1-(imidazol-4-yl)glycerol 3-phosphate = 3-(imidazol-4-yl)-2-oxopropyl phosphate + H2O. It participates in amino-acid biosynthesis; L-histidine biosynthesis; L-histidine from 5-phospho-alpha-D-ribose 1-diphosphate: step 6/9. This is Imidazoleglycerol-phosphate dehydratase from Zymomonas mobilis subsp. mobilis (strain ATCC 31821 / ZM4 / CP4).